Here is a 352-residue protein sequence, read N- to C-terminus: Uroporphyrinogen decarboxylase (352 aa).

Substrate-binding positions include 27–31, Asp-77, Tyr-154, Thr-209, and His-325; that span reads RQAGR.

Belongs to the uroporphyrinogen decarboxylase family. As to quaternary structure, homodimer.

The protein localises to the cytoplasm. The catalysed reaction is uroporphyrinogen III + 4 H(+) = coproporphyrinogen III + 4 CO2. Its pathway is porphyrin-containing compound metabolism; protoporphyrin-IX biosynthesis; coproporphyrinogen-III from 5-aminolevulinate: step 4/4. Functionally, catalyzes the decarboxylation of four acetate groups of uroporphyrinogen-III to yield coproporphyrinogen-III. The sequence is that of Uroporphyrinogen decarboxylase from Legionella pneumophila (strain Corby).